The chain runs to 552 residues: Putative transport protein HS_1470 (552 aa).

A run of 5 helical transmembrane segments spans residues 4 to 24, 28 to 48, 67 to 87, 95 to 115, and 157 to 177; these read IAIT…IGHW, GVGL…HFMN, LILF…ASLL, GLAT…YKVV, and MAYA…MWLI. RCK C-terminal domains follow at residues 190-275 and 277-360; these read KQFQ…VIGE and IDMP…IIGN. 6 consecutive transmembrane segments (helical) span residues 370-390, 402-424, 438-458, 463-483, 495-515, and 529-549; these read MLPV…PFYI, AGGP…LYWF, IVLF…DTLV, LEWM…TGII, LCGL…ANAI, and VYPL…ILLW.

This sequence belongs to the AAE transporter (TC 2.A.81) family. YidE subfamily.

It is found in the cell membrane. This chain is Putative transport protein HS_1470, found in Histophilus somni (strain 129Pt) (Haemophilus somnus).